The primary structure comprises 126 residues: Fatty acid-binding protein, liver (126 aa).

N-acetylalanine is present on alanine 2. Lysine 77, histidine 99, and glutamine 101 together coordinate cholate.

The protein belongs to the calycin superfamily. Fatty-acid binding protein (FABP) family.

The protein resides in the cytoplasm. In terms of biological role, binds free fatty acids and their coenzyme A derivatives, bilirubin, and some other small molecules in the cytoplasm. May be involved in intracellular lipid transport. This is Fatty acid-binding protein, liver (fabp1) from Aquarana catesbeiana (American bullfrog).